The following is a 99-amino-acid chain: Small ribosomal subunit protein bS18 (99 aa).

Positions Met-1 to Gln-25 are disordered.

Belongs to the bacterial ribosomal protein bS18 family. Part of the 30S ribosomal subunit. Forms a tight heterodimer with protein bS6.

Its function is as follows. Binds as a heterodimer with protein bS6 to the central domain of the 16S rRNA, where it helps stabilize the platform of the 30S subunit. The sequence is that of Small ribosomal subunit protein bS18 from Solibacter usitatus (strain Ellin6076).